The chain runs to 421 residues: 4-hydroxy-3-methylbut-2-en-1-yl diphosphate synthase (flavodoxin) (421 aa).

Positions 1–20 (MHDAVTRPTPPSDATSWPRR) are disordered. Cys-311, Cys-314, Cys-357, and Glu-364 together coordinate [4Fe-4S] cluster.

The protein belongs to the IspG family. [4Fe-4S] cluster is required as a cofactor.

The enzyme catalyses (2E)-4-hydroxy-3-methylbut-2-enyl diphosphate + oxidized [flavodoxin] + H2O + 2 H(+) = 2-C-methyl-D-erythritol 2,4-cyclic diphosphate + reduced [flavodoxin]. Its pathway is isoprenoid biosynthesis; isopentenyl diphosphate biosynthesis via DXP pathway; isopentenyl diphosphate from 1-deoxy-D-xylulose 5-phosphate: step 5/6. In terms of biological role, converts 2C-methyl-D-erythritol 2,4-cyclodiphosphate (ME-2,4cPP) into 1-hydroxy-2-methyl-2-(E)-butenyl 4-diphosphate. The polypeptide is 4-hydroxy-3-methylbut-2-en-1-yl diphosphate synthase (flavodoxin) (Stenotrophomonas maltophilia (strain R551-3)).